We begin with the raw amino-acid sequence, 188 residues long: PRA1 family protein 3 (188 aa).

At Met-1 the chain carries N-acetylmethionine. Residues 1-35 (MDVNIAPLRAWDDFFPGSDRFARPDFRDISKWNNR) are Cytoplasmic-facing. 2 helical membrane-spanning segments follow: residues 36–56 (VVSN…MMIS) and 57–77 (VVGF…VLVF). The Cytoplasmic portion of the chain corresponds to 78–93 (TGFVWAAHNKDILRRL). The next 2 membrane-spanning stretches (helical) occupy residues 94–114 (KKQY…FLIS) and 115–135 (MFGG…LMFI). A required for homodimer formation and heterodimer formation with ARL6IP1 region spans residues 103 to 117 (MVVMLASYFLISMFG). Residues 136 to 188 (HASLRLRNLKNKLENKIEGIGLKRTPMGIVLDALEQQEENISKFADYISKVNE) are Cytoplasmic-facing. A targeting to endoplasmic reticulum membrane region spans residues 136–188 (HASLRLRNLKNKLENKIEGIGLKRTPMGIVLDALEQQEENISKFADYISKVNE).

It belongs to the PRA1 family. As to quaternary structure, homodimer. Heterodimer with ARL6IP1. Forms multimers. Interacts with ARL6. Interacts with prenylated RAB1A and RAB3A. Interacts with SLC1A1/EAAC1. Interacts with RTN2 (via first transmembrane domain). Does not interact with VAMP1, VAMP2 or VAMP3.

It is found in the endoplasmic reticulum membrane. Its subcellular location is the cell membrane. The protein localises to the cytoplasm. The protein resides in the cytoskeleton. In terms of biological role, regulates intracellular concentrations of taurine and glutamate. Negatively modulates SLC1A1/EAAC1 glutamate transport activity by decreasing its affinity for glutamate in a PKC activity-dependent manner. Plays a role in the retention of SLC1A1/EAAC1 in the endoplasmic reticulum. The polypeptide is PRA1 family protein 3 (ARL6IP5) (Sus scrofa (Pig)).